Here is a 574-residue protein sequence, read N- to C-terminus: MELPILKTNAITAILAAVTLCFASSQNITEEFYQSTCSAVSKGYLSALRTGWYTSVITIELSNIKENKCNGTDAKVKLIKQELDKYKSAVTELQLLMQSTPATNNRARRELPRFMNYTLNNTKNTNVTLSKKRKRRFLGFLLGVGSAIASGIAVSKVLHLEGEVNKIKSALLSTNKAVVSLSNGVSVLTSKVLDLKNYIDKQLLPIVNKQSCSISNIETVIEFQQKNNRLLEITREFSVNAGVTTPVSTYMLTNSELLSLINDMPITNDQKKLMSNNVQIVRQQSYSIMSIIKEEVLAYVVQLPLYGVIDTPCWKLHTSPLCTTNTKEGSNICLTRTDRGWYCDNAGSVSFFPLAETCKVQSNRVFCDTMNSLTLPSEVNLCNIDIFNPKYDCKIMTSKTDVSSSVITSLGAIVSCYGKTKCTASNKDRGIIKTFSNGCDYVSNKGVDTVSVGNTLYYVNKQEGKSLYVKGEPIINFYDPLVFPSDEFDASISQVNEKINQSLAFIRKSDELLHNVNAGKSTTNIMITTIIIVIIVILLSLIAVGLLLYCKARSTPVTLSKDQLSGINNIAFSN.

Positions 1 to 25 (MELPILKTNAITAILAAVTLCFASS) are cleaved as a signal peptide. The Extracellular portion of the chain corresponds to 26–524 (QNITEEFYQS…NVNAGKSTTN (499 aa)). N-linked (GlcNAc...) asparagine; by host glycosylation is found at N27 and N70. Intrachain disulfides connect C37–C439, C69–C212, C313–C343, C322–C333, C358–C367, C382–C393, and C416–C422. Residues 76–96 (VKLIKQELDKYKSAVTELQLL) are a coiled coil. N-linked (GlcNAc...) asparagine; by host glycans are attached at residues N116, N120, and N126. The fusion peptide stretch occupies residues 137–157 (FLGFLLGVGSAIASGIAVSKV). The stretch at 153-209 (AVSKVLHLEGEVNKIKSALLSTNKAVVSLSNGVSVLTSKVLDLKNYIDKQLLPIVNK) forms a coiled coil. The stretch at 481 to 516 (LVFPSDEFDASISQVNEKINQSLAFIRKSDELLHNV) forms a coiled coil. A glycan (N-linked (GlcNAc...) asparagine; by host) is linked at N500. Residues 525–550 (IMITTIIIVIIVILLSLIAVGLLLYC) form a helical membrane-spanning segment. C550 carries S-palmitoyl cysteine; by host lipidation. Topologically, residues 551 to 574 (KARSTPVTLSKDQLSGINNIAFSN) are cytoplasmic.

The protein belongs to the paramyxoviruses fusion glycoprotein family. In terms of assembly, homotrimer. Heterodimer with fusion protein F2; disulfide-linked. Interacts with host NCL; this interaction plays a role in viral entry into the host cell. As a heterodimer with F2, interacts with host heparan sulfate. As a heterodimer with F2, interacts with host IGF1R; this interaction activates PRKCZ/PKCzeta that recruits NCL/nucleolin from the host nucleus to the plasma membrane. Part of a complex composed of F1, F2 and G glycoproteins. As a heterodimer with F2, interacts with host RHOA; this interaction facilitates virus-induced syncytium formation. Homotrimer. Heterodimer with fusion protein F1; disulfide-linked. As a heterodimer with F1, interacts with host heparan sulfate. As a heterodimer with F1, interacts with host IGF1R; this interaction activates PRKCZ/PKCzeta that recruits NCL/nucleolin from the host nucleus to the plasma membrane. Part of a complex composed of F1, F2 and G glycoproteins. As a heterodimer with F1, interacts with host RHOA; this interaction facilitates virus-induced syncytium formation. The F glycoprotein is synthesized as a F0 inactive precursor that is heavily N-glycosylated and processed at two sites by a host furin-like protease probably in the Golgi. The cleavage site between p27 and F1 may occur after endocytosis to yield the mature F1 and F2 proteins. Both cleavages are required for membrane fusion and p27 is released from the processed protein.

The protein resides in the host Golgi apparatus membrane. Its subcellular location is the virion membrane. The protein localises to the host cell membrane. Inactive precursor that is cleaved at two sites by a furin-like protease to give rise to the mature F1 and F2 fusion glycoproteins. Its function is as follows. Class I viral fusion protein. Under the current model, the protein has at least 3 conformational states: pre-fusion native state, pre-hairpin intermediate state, and post-fusion hairpin state. During viral and plasma cell membrane fusion, the coiled coil regions assume a trimer-of-hairpins structure, positioning the fusion peptide in close proximity to the C-terminal region of the ectodomain. The formation of this structure appears to drive apposition and subsequent fusion of viral and cellular membranes leading to delivery of the nucleocapsid into the cytoplasm. This fusion is pH independent and occurs at the plasma or endosomal membrane. The trimer of F1-F2 (F protein) also facilitates the attachment to host cell by binding to host heparan sulfate. F protein is involved in the entry into the host cell through the interaction with host IGF1R. This interaction activates PRKCZ/PKCzeta that recruits host NCL/nucleolin to the apical cell surface where it can bind fusion glycoprotein F1. Later in infection, F protein expressed at the plasma membrane of infected cells can mediate fusion with adjacent cells to form syncytia, a cytopathic effect that could lead to tissue necrosis. F protein may trigger p53-dependent apoptosis. Functionally, major determinant of the species specificity of RSV infection. The trimer of F1-F2 (F protein) also facilitates the attachment to host cell by binding to host heparan sulfate. F protein is involved in the entry into the host cell through the interaction with host IGF1R. This interaction activates PRKCZ/PKCzeta that recruits host NCL/nucleolin to the apical cell surface where it can bind fusion glycoprotein F1. Later in infection, F protein expressed at the plasma membrane of infected cells can mediate fusion with adjacent cells to form syncytia, a cytopathic effect that could lead to tissue necrosis. F protein seems to trigger p53-dependent apoptosis. This chain is Fusion glycoprotein F0 (F), found in Human respiratory syncytial virus A (strain RSS-2).